The following is a 239-amino-acid chain: Sugar fermentation stimulation protein homolog (239 aa).

This sequence belongs to the SfsA family.

This chain is Sugar fermentation stimulation protein homolog, found in Synechococcus sp. (strain JA-2-3B'a(2-13)) (Cyanobacteria bacterium Yellowstone B-Prime).